Here is a 36-residue protein sequence, read N- to C-terminus: Beta-amanitin proprotein (36 aa).

The propeptide occupies 1 to 10; it reads MSDINATRLP. The segment at residues 11-18 is a cross-link (cyclopeptide (Ile-Pro)); that stretch reads IWGIGCDP. The segment at residues 12–16 is a cross-link (2'-cysteinyl-6'-hydroxytryptophan sulfoxide (Trp-Cys)); it reads WGIGC. The propeptide occupies 19 to 36; sequence CIGDDVTALLTRGEASLC.

Belongs to the MSDIN fungal toxin family. In terms of processing, processed by the macrocyclase-peptidase enzyme POPB to yield a toxic cyclic decapeptide. POPB first removes 10 residues from the N-terminus. Conformational trapping of the remaining peptide forces the enzyme to release this intermediate rather than proceed to macrocyclization. The enzyme rebinds the remaining peptide in a different conformation and catalyzes macrocyclization of the N-terminal 8 residues.

Its function is as follows. Toxin belonging to the bicyclic octapeptides amatoxins that acts by binding non-competitively to RNA polymerase II and greatly slowing the elongation of transcripts from target promoters. This chain is Beta-amanitin proprotein, found in Amanita phalloides (Death cap).